A 146-amino-acid polypeptide reads, in one-letter code: D-aminoacyl-tRNA deacylase (146 aa).

Residues Gly-137–Pro-138 carry the Gly-cisPro motif, important for rejection of L-amino acids motif.

Belongs to the DTD family. As to quaternary structure, homodimer.

The protein resides in the cytoplasm. It catalyses the reaction glycyl-tRNA(Ala) + H2O = tRNA(Ala) + glycine + H(+). The catalysed reaction is a D-aminoacyl-tRNA + H2O = a tRNA + a D-alpha-amino acid + H(+). An aminoacyl-tRNA editing enzyme that deacylates mischarged D-aminoacyl-tRNAs. Also deacylates mischarged glycyl-tRNA(Ala), protecting cells against glycine mischarging by AlaRS. Acts via tRNA-based rather than protein-based catalysis; rejects L-amino acids rather than detecting D-amino acids in the active site. By recycling D-aminoacyl-tRNA to D-amino acids and free tRNA molecules, this enzyme counteracts the toxicity associated with the formation of D-aminoacyl-tRNA entities in vivo and helps enforce protein L-homochirality. The sequence is that of D-aminoacyl-tRNA deacylase from Bacillus cereus (strain ATCC 14579 / DSM 31 / CCUG 7414 / JCM 2152 / NBRC 15305 / NCIMB 9373 / NCTC 2599 / NRRL B-3711).